We begin with the raw amino-acid sequence, 288 residues long: UPF0276 protein VP3015 (288 aa).

Belongs to the UPF0276 family.

In Vibrio parahaemolyticus serotype O3:K6 (strain RIMD 2210633), this protein is UPF0276 protein VP3015.